Reading from the N-terminus, the 80-residue chain is Conotoxin SmIVA (80 aa).

The first 21 residues, 1 to 21 (MGMRMMFTVFLLVVLATTVVS), serve as a signal peptide directing secretion. The propeptide occupies 22–38 (IPSDRASDGRNAAVNER). Gln-39 carries the pyrrolidone carboxylic acid modification. O-linked (HexNAc...) serine glycosylation occurs at Ser-45. A 4-hydroxyproline mark is found at Pro-55, Pro-60, Pro-70, and Pro-72. A Serine amide modification is found at Ser-75. Residues 76–80 (GRRND) constitute a propeptide that is removed on maturation.

This sequence belongs to the conotoxin A superfamily. In terms of processing, contains 3 disulfide bonds. In terms of tissue distribution, expressed by the venom duct.

It localises to the secreted. Functionally, neurotoxin with probable activity on sodium channel. Induces intense repetitive firing of the frog neuromuscular junction, leading to a tetanic contracture in muscle fiber (spastic paralysis). In vivo, shows the same effect as the whole venom when injected on fish prey. This is Conotoxin SmIVA from Conus stercusmuscarum (Fly-specked cone).